Consider the following 351-residue polypeptide: Nicotinate-nucleotide--dimethylbenzimidazole phosphoribosyltransferase (351 aa).

The active-site Proton acceptor is glutamate 319.

The protein belongs to the CobT family.

The enzyme catalyses 5,6-dimethylbenzimidazole + nicotinate beta-D-ribonucleotide = alpha-ribazole 5'-phosphate + nicotinate + H(+). It participates in nucleoside biosynthesis; alpha-ribazole biosynthesis; alpha-ribazole from 5,6-dimethylbenzimidazole: step 1/2. Functionally, catalyzes the synthesis of alpha-ribazole-5'-phosphate from nicotinate mononucleotide (NAMN) and 5,6-dimethylbenzimidazole (DMB). The chain is Nicotinate-nucleotide--dimethylbenzimidazole phosphoribosyltransferase from Desulforamulus reducens (strain ATCC BAA-1160 / DSM 100696 / MI-1) (Desulfotomaculum reducens).